Reading from the N-terminus, the 295-residue chain is Pyridoxal 5'-phosphate synthase subunit PdxS (295 aa).

D-ribose 5-phosphate is bound at residue Asp25. Lys82 acts as the Schiff-base intermediate with D-ribose 5-phosphate in catalysis. Gly154 is a D-ribose 5-phosphate binding site. Arg166 provides a ligand contact to D-glyceraldehyde 3-phosphate. Residues Gly215 and 236–237 each bind D-ribose 5-phosphate; that span reads GS.

It belongs to the PdxS/SNZ family. In the presence of PdxT, forms a dodecamer of heterodimers.

The enzyme catalyses aldehydo-D-ribose 5-phosphate + D-glyceraldehyde 3-phosphate + L-glutamine = pyridoxal 5'-phosphate + L-glutamate + phosphate + 3 H2O + H(+). It functions in the pathway cofactor biosynthesis; pyridoxal 5'-phosphate biosynthesis. Its function is as follows. Catalyzes the formation of pyridoxal 5'-phosphate from ribose 5-phosphate (RBP), glyceraldehyde 3-phosphate (G3P) and ammonia. The ammonia is provided by the PdxT subunit. Can also use ribulose 5-phosphate and dihydroxyacetone phosphate as substrates, resulting from enzyme-catalyzed isomerization of RBP and G3P, respectively. The chain is Pyridoxal 5'-phosphate synthase subunit PdxS from Oceanobacillus iheyensis (strain DSM 14371 / CIP 107618 / JCM 11309 / KCTC 3954 / HTE831).